Here is a 155-residue protein sequence, read N- to C-terminus: uncharacterized protein (155 aa).

This is an uncharacterized protein from Acanthamoeba polyphaga (Amoeba).